We begin with the raw amino-acid sequence, 249 residues long: Small ribosomal subunit protein eS6 (249 aa).

A compositionally biased stretch (basic and acidic residues) spans 216–229; sequence RMKEAKEKRQEQIA. Residues 216–249 are disordered; that stretch reads RMKEAKEKRQEQIAKRRRLSSLRASTSKSESSQK. Residues Ser235, Ser236, Ser240, Ser244, and Ser247 each carry the phosphoserine modification. Residues 236–249 show a composition bias toward low complexity; the sequence is SLRASTSKSESSQK.

It belongs to the eukaryotic ribosomal protein eS6 family. Component of the small ribosomal subunit. In terms of processing, ribosomal protein S6 is the major substrate of protein kinases in eukaryote ribosomes. The phosphorylation is stimulated by growth factors, tumor promoting agents, and mitogens. It is dephosphorylated at growth arrest.

The protein resides in the cytoplasm. Its function is as follows. Component of the 40S small ribosomal subunit. Plays an important role in controlling cell growth and proliferation through the selective translation of particular classes of mRNA. This chain is Small ribosomal subunit protein eS6 (rps6), found in Oncorhynchus mykiss (Rainbow trout).